A 211-amino-acid polypeptide reads, in one-letter code: Pupal cuticle protein G1A (211 aa).

5 repeat units span residues 13-16, 21-24, 33-36, 111-114, and 179-182.

Its function is as follows. Component of the cuticle of the pupa of Tenebrio molitor. This is Pupal cuticle protein G1A from Tenebrio molitor (Yellow mealworm beetle).